Here is a 347-residue protein sequence, read N- to C-terminus: Mitochondrial carrier protein rim2 (347 aa).

Solcar repeat units lie at residues 32 to 136 (PPPL…GKRI), 146 to 234 (ENSQ…FKHA), and 256 to 345 (LDWG…IMHF). 6 helical membrane passes run 38-58 (FIAG…LDVV), 105-125 (TRAL…ARSI), 152-172 (LMAA…IWLV), 214-233 (SLLG…KFKH), 262-282 (LGGA…HEVV), and 317-338 (LYGG…LFGS).

Its subcellular location is the mitochondrion inner membrane. It catalyses the reaction 5-methyl-UTP(out) + UTP(in) = 5-methyl-UTP(in) + UTP(out). Functionally, mitochondrial transporter that imports/exports pyrimidine nucleotides into and from mitochondria. Selectively transports uridine, thymidine, and cytosine (deoxy)nucleoside di- and triphosphates by an antiport mechanism. Also transports, with lower efficiency, uridine, thymidine, and cytosine (deoxy)nucleoside monophosphates as well as guanosine (deoxy)nucleoside di- and triphosphate. May import (deoxy)nucleoside triphosphates in exchange for intramitochondrial (deoxy)nucleoside monophosphates, thus providing precursors necessary for de novo synthesis of mitochondrial DNA and RNA while exporting products of their catabolism. Mediates the transport of iron and other divalent metal ions like copper and zinc across the mitochondrial inner membrane in a pyrimidine nucleotide-dependent fashion. Catalyzes the co-import of pyrimidine nucleotides and divalent metal ions including ferrous iron. Participates in mitochondrial genome maintenance, regulation of mitochondrial membrane potential and mitochondrial respiration. The protein is Mitochondrial carrier protein rim2 (rim2) of Schizosaccharomyces pombe (strain 972 / ATCC 24843) (Fission yeast).